The sequence spans 331 residues: DNA-directed RNA polymerase subunit alpha (331 aa).

Positions 1–246 (MMQTSRTLHN…GLFSPLQEVS (246 aa)) are alpha N-terminal domain (alpha-NTD). The interval 256–331 (AEDNQKNQIP…LTLPRERSKT (76 aa)) is alpha C-terminal domain (alpha-CTD).

It belongs to the RNA polymerase alpha chain family. In cyanobacteria the RNAP catalytic core is composed of 2 alpha, 1 beta, 1 beta', 1 gamma and 1 omega subunit. When a sigma factor is associated with the core the holoenzyme is formed, which can initiate transcription.

The catalysed reaction is RNA(n) + a ribonucleoside 5'-triphosphate = RNA(n+1) + diphosphate. In terms of biological role, DNA-dependent RNA polymerase catalyzes the transcription of DNA into RNA using the four ribonucleoside triphosphates as substrates. The sequence is that of DNA-directed RNA polymerase subunit alpha from Synechococcus sp. (strain JA-3-3Ab) (Cyanobacteria bacterium Yellowstone A-Prime).